The following is an 82-amino-acid chain: UPF0291 protein LVIS_1359 (82 aa).

The protein belongs to the UPF0291 family.

It is found in the cytoplasm. The sequence is that of UPF0291 protein LVIS_1359 from Levilactobacillus brevis (strain ATCC 367 / BCRC 12310 / CIP 105137 / JCM 1170 / LMG 11437 / NCIMB 947 / NCTC 947) (Lactobacillus brevis).